Reading from the N-terminus, the 524-residue chain is Translation initiation factor eIF2B subunit delta (524 aa).

Residues 1 to 155 (MAAVAVAVRE…EHTPADDPTL (155 aa)) form a disordered region. The residue at position 2 (alanine 2) is an N-acetylalanine. 2 stretches are compositionally biased toward basic and acidic residues: residues 8 to 20 (VREE…KTEL) and 31 to 40 (LTQEEKLQLR). Serine 12 bears the Phosphoserine mark. Residues 41–51 (KEKKQQKKKRK) show a composition bias toward basic residues. At threonine 86 the chain carries Phosphothreonine. Basic and acidic residues predominate over residues 96-121 (SKAELRAERRAKQEAERALKQARKGE). Over residues 130-140 (CPSTAGETTSG) the composition is skewed to polar residues. Residues 171–180 (RKDYGSKVSL) are may bind the chemical integrated stress response (ISR) inhibitor ISRIB.

This sequence belongs to the eIF-2B alpha/beta/delta subunits family. As to quaternary structure, component of the translation initiation factor 2B (eIF2B) complex which is a heterodecamer of two sets of five different subunits: alpha, beta, gamma, delta and epsilon. Subunits alpha, beta and delta comprise a regulatory subcomplex and subunits epsilon and gamma comprise a catalytic subcomplex. Within the complex, the hexameric regulatory complex resides at the center, with the two heterodimeric catalytic subcomplexes bound on opposite sides.

The protein localises to the cytoplasm. Its subcellular location is the cytosol. Its activity is regulated as follows. Activated by the chemical integrated stress response (ISR) inhibitor ISRIB which stimulates guanine nucleotide exchange factor activity for both phosphorylated and unphosphorylated eIF2. In terms of biological role, acts as a component of the translation initiation factor 2B (eIF2B) complex, which catalyzes the exchange of GDP for GTP on eukaryotic initiation factor 2 (eIF2) gamma subunit. Its guanine nucleotide exchange factor activity is repressed when bound to eIF2 complex phosphorylated on the alpha subunit, thereby limiting the amount of methionyl-initiator methionine tRNA available to the ribosome and consequently global translation is repressed. The polypeptide is Translation initiation factor eIF2B subunit delta (Eif2b4) (Mus musculus (Mouse)).